The sequence spans 269 residues: GTP cyclohydrolase FolE2 (269 aa).

The protein belongs to the GTP cyclohydrolase IV family.

It carries out the reaction GTP + H2O = 7,8-dihydroneopterin 3'-triphosphate + formate + H(+). The protein operates within cofactor biosynthesis; 7,8-dihydroneopterin triphosphate biosynthesis; 7,8-dihydroneopterin triphosphate from GTP: step 1/1. In terms of biological role, converts GTP to 7,8-dihydroneopterin triphosphate. The protein is GTP cyclohydrolase FolE2 of Burkholderia ambifaria (strain MC40-6).